The primary structure comprises 88 residues: Fe-S protein maturation auxiliary factor SufT (88 aa).

The protein belongs to the MIP18 family.

Involved in the maturation of iron-sulfur (Fe-S) proteins. May function as a Fe-S cluster carrier. Is required for S.aureus growth under conditions that impose a high demand for lipoic acid, likely via a role in the maturation of the lipoate synthase LipA. Is non-essential for growth in conditions that impose a low demand for lipoic acid or Fe-S clusters, such as fermentative growth. Also seems to be involved in the maturation of AcnA, LeuCD and IlvD proteins, that utilize Fe-S cluster cofactors, and its role increases under conditions of high-demand for Fe-S clusters (respiratory growth). Is not involved in the repair of Fe-S clusters damaged by reactive oxygen species or in the physical protection of Fe-S clusters from oxidants. Displays synergy with the Fe-S cluster carrier Nfu. The protein is Fe-S protein maturation auxiliary factor SufT of Staphylococcus aureus (strain USA300).